The chain runs to 290 residues: Appressoria-specific virulence factor GAS2 (290 aa).

An N-terminal signal peptide occupies residues 1 to 19 (MKYTSAILISAFAATNVFA). N99 is a glycosylation site (N-linked (GlcNAc...) asparagine). A disordered region spans residues 121 to 140 (LPRAGGGTSTPKGTEETGVK).

It is found in the cytoplasm. In terms of biological role, appressoria-specific virulence factor required for appressorial penetration in host and lesion development. The protein is Appressoria-specific virulence factor GAS2 of Pyricularia oryzae (strain 70-15 / ATCC MYA-4617 / FGSC 8958) (Rice blast fungus).